Here is a 271-residue protein sequence, read N- to C-terminus: Shikimate dehydrogenase (NADP(+)) (271 aa).

Shikimate contacts are provided by residues 14 to 16 (SKS) and Thr-61. Catalysis depends on Lys-65, which acts as the Proton acceptor. The shikimate site is built by Asn-86 and Asp-102. Residues 126–130 (GAGGA), 149–154 (NRTFSR), and Met-213 contribute to the NADP(+) site. Shikimate is bound at residue Tyr-215. An NADP(+)-binding site is contributed by Gly-238.

It belongs to the shikimate dehydrogenase family. In terms of assembly, homodimer.

The catalysed reaction is shikimate + NADP(+) = 3-dehydroshikimate + NADPH + H(+). Its pathway is metabolic intermediate biosynthesis; chorismate biosynthesis; chorismate from D-erythrose 4-phosphate and phosphoenolpyruvate: step 4/7. Functionally, involved in the biosynthesis of the chorismate, which leads to the biosynthesis of aromatic amino acids. Catalyzes the reversible NADPH linked reduction of 3-dehydroshikimate (DHSA) to yield shikimate (SA). This is Shikimate dehydrogenase (NADP(+)) from Histophilus somni (strain 2336) (Haemophilus somnus).